The following is a 155-amino-acid chain: Aspartate 1-decarboxylase (155 aa).

Residue serine 24 is the Schiff-base intermediate with substrate; via pyruvic acid of the active site. Pyruvic acid (Ser) is present on serine 24. Residue threonine 56 participates in substrate binding. The active-site Proton donor is tyrosine 57. 72–74 (GAA) lines the substrate pocket.

It belongs to the PanD family. As to quaternary structure, heterooctamer of four alpha and four beta subunits. It depends on pyruvate as a cofactor. Is synthesized initially as an inactive proenzyme, which is activated by self-cleavage at a specific serine bond to produce a beta-subunit with a hydroxyl group at its C-terminus and an alpha-subunit with a pyruvoyl group at its N-terminus.

It is found in the cytoplasm. The catalysed reaction is L-aspartate + H(+) = beta-alanine + CO2. It functions in the pathway cofactor biosynthesis; (R)-pantothenate biosynthesis; beta-alanine from L-aspartate: step 1/1. In terms of biological role, catalyzes the pyruvoyl-dependent decarboxylation of aspartate to produce beta-alanine. In Agrobacterium fabrum (strain C58 / ATCC 33970) (Agrobacterium tumefaciens (strain C58)), this protein is Aspartate 1-decarboxylase.